A 370-amino-acid polypeptide reads, in one-letter code: Cytochrome b (370 aa).

4 helical membrane-spanning segments follow: residues 25–45 (FGSM…FLAV), 69–90 (WLMQ…YIHI), 105–125 (WLSG…GYVL), and 170–190 (FFAL…LHIM). H75 and H89 together coordinate heme b. 2 residues coordinate heme b: H174 and H188. An a ubiquinone-binding site is contributed by H193. 4 consecutive transmembrane segments (helical) span residues 218-238 (YKDL…VSFF), 280-300 (LGGA…PFTH), 312-332 (FMQL…WTAT), and 339-358 (FTTI…ISNP).

Belongs to the cytochrome b family. As to quaternary structure, the cytochrome bc1 complex contains 3 respiratory subunits (MT-CYB, CYC1 and UQCRFS1), 2 core proteins (UQCRC1 and UQCRC2) and probably 6 low-molecular weight proteins. Heme b is required as a cofactor.

The protein localises to the mitochondrion inner membrane. In terms of biological role, component of the ubiquinol-cytochrome c reductase complex (complex III or cytochrome b-c1 complex) that is part of the mitochondrial respiratory chain. The b-c1 complex mediates electron transfer from ubiquinol to cytochrome c. Contributes to the generation of a proton gradient across the mitochondrial membrane that is then used for ATP synthesis. In Chilabothrus fordii (Ford's boa), this protein is Cytochrome b (MT-CYB).